The primary structure comprises 295 residues: Probable endonuclease lcl3 (295 aa).

A disordered region spans residues 1 to 35 (MRWPPWASDSQAQQQTAKHDEHDERQAAAKSTTTS). Residues 17 to 27 (AKHDEHDERQA) are compositionally biased toward basic and acidic residues. The chain crosses the membrane as a helical span at residues 52-74 (FTEARTIIPTLILTSGFLGAFYI). Residues 96 to 263 (RSLLGQVTSV…KLRGVGLWKD (168 aa)) enclose the TNase-like domain. Residue R147 is part of the active site. D152 contributes to the Ca(2+) binding site. Active-site residues include E155 and R195.

This sequence belongs to the LCL3 family.

It is found in the mitochondrion. It localises to the membrane. The sequence is that of Probable endonuclease lcl3 (lcl3) from Neosartorya fischeri (strain ATCC 1020 / DSM 3700 / CBS 544.65 / FGSC A1164 / JCM 1740 / NRRL 181 / WB 181) (Aspergillus fischerianus).